Consider the following 397-residue polypeptide: Elongation factor Tu (397 aa).

The 197-residue stretch at 10-206 folds into the tr-type G domain; sequence KPHCNIGTIG…TIDEYVPDPE (197 aa). A G1 region spans residues 19 to 26; the sequence is GHVDHGKT. 19-26 serves as a coordination point for GTP; sequence GHVDHGKT. T26 contacts Mg(2+). The tract at residues 61 to 65 is G2; the sequence is GITIS. Residues 82–85 are G3; the sequence is DCPG. Residues 82–86 and 137–140 each bind GTP; these read DCPGH and NKCD. Positions 137–140 are G4; the sequence is NKCD. The segment at 175-177 is G5; it reads SAL.

It belongs to the TRAFAC class translation factor GTPase superfamily. Classic translation factor GTPase family. EF-Tu/EF-1A subfamily. As to quaternary structure, monomer.

It is found in the cytoplasm. The catalysed reaction is GTP + H2O = GDP + phosphate + H(+). In terms of biological role, GTP hydrolase that promotes the GTP-dependent binding of aminoacyl-tRNA to the A-site of ribosomes during protein biosynthesis. This is Elongation factor Tu from Lachnospira eligens (strain ATCC 27750 / DSM 3376 / VPI C15-48 / C15-B4) (Eubacterium eligens).